Here is a 442-residue protein sequence, read N- to C-terminus: tRNA-2-methylthio-N(6)-dimethylallyladenosine synthase (442 aa).

Residues 6–122 form the MTTase N-terminal domain; that stretch reads RKFYIHTFGC…LPVLIAEAGK (117 aa). Cys-15, Cys-51, Cys-85, Cys-157, Cys-161, and Cys-164 together coordinate [4Fe-4S] cluster. A Radical SAM core domain is found at 143 to 373; it reads RTQSLTAFVP…IDLQNGISAE (231 aa). Residues 376–439 enclose the TRAM domain; sequence RLAIGSVVEV…SATLIGRAAE (64 aa).

The protein belongs to the methylthiotransferase family. MiaB subfamily. In terms of assembly, monomer. Requires [4Fe-4S] cluster as cofactor.

It localises to the cytoplasm. It catalyses the reaction N(6)-dimethylallyladenosine(37) in tRNA + (sulfur carrier)-SH + AH2 + 2 S-adenosyl-L-methionine = 2-methylsulfanyl-N(6)-dimethylallyladenosine(37) in tRNA + (sulfur carrier)-H + 5'-deoxyadenosine + L-methionine + A + S-adenosyl-L-homocysteine + 2 H(+). Catalyzes the methylthiolation of N6-(dimethylallyl)adenosine (i(6)A), leading to the formation of 2-methylthio-N6-(dimethylallyl)adenosine (ms(2)i(6)A) at position 37 in tRNAs that read codons beginning with uridine. The chain is tRNA-2-methylthio-N(6)-dimethylallyladenosine synthase from Chlorobium limicola (strain DSM 245 / NBRC 103803 / 6330).